The following is a 687-amino-acid chain: DNA ligase (687 aa).

NAD(+)-binding positions include 34-38, 83-84, and glutamate 117; these read DAEYD and SL. The N6-AMP-lysine intermediate role is filled by lysine 119. NAD(+)-binding residues include arginine 140, glutamate 182, lysine 298, and lysine 322. Zn(2+) is bound by residues cysteine 416, cysteine 419, cysteine 434, and cysteine 439. A BRCT domain is found at 609–687; that stretch reads EARGPFAGKT…EEEFVRLLKE (79 aa).

The protein belongs to the NAD-dependent DNA ligase family. LigA subfamily. Mg(2+) is required as a cofactor. Requires Mn(2+) as cofactor.

It catalyses the reaction NAD(+) + (deoxyribonucleotide)n-3'-hydroxyl + 5'-phospho-(deoxyribonucleotide)m = (deoxyribonucleotide)n+m + AMP + beta-nicotinamide D-nucleotide.. DNA ligase that catalyzes the formation of phosphodiester linkages between 5'-phosphoryl and 3'-hydroxyl groups in double-stranded DNA using NAD as a coenzyme and as the energy source for the reaction. It is essential for DNA replication and repair of damaged DNA. The polypeptide is DNA ligase (Anaeromyxobacter dehalogenans (strain 2CP-C)).